A 134-amino-acid polypeptide reads, in one-letter code: uncharacterized protein (134 aa).

Residues Lys-10 to Leu-70 form the HTH tetR-type domain. The segment at residues Thr-33–Phe-52 is a DNA-binding region (H-T-H motif).

In terms of biological role, unknown, does not seem to be involved in regulation of the ttgGHI or ttgVW operons. This is an uncharacterized protein from Pseudomonas putida (strain DOT-T1E).